Consider the following 182-residue polypeptide: Oligoribonuclease (182 aa).

In terms of domain architecture, Exonuclease spans Leu7–Leu170. Tyr128 is an active-site residue.

This sequence belongs to the oligoribonuclease family.

It localises to the cytoplasm. 3'-to-5' exoribonuclease specific for small oligoribonucleotides. The protein is Oligoribonuclease of Hahella chejuensis (strain KCTC 2396).